We begin with the raw amino-acid sequence, 275 residues long: Calcium-binding protein 4 (275 aa).

Residues 1–12 (MTTEQARGQQGP) show a composition bias toward polar residues. A disordered region spans residues 1 to 112 (MTTEQARGQQ…SLHDAAQRTY (112 aa)). Residues 38 to 55 (TRKRSKKERGLRGSRKRT) show a composition bias toward basic residues. S42 carries the phosphoserine modification. EF-hand domains are found at residues 129–164 (EELD…LGYM), 183–200 (GRVD…KLRE), 206–241 (LGVR…LLGE), and 243–275 (LAGP…LSRH). Positions 142, 144, 146, 148, and 153 each coordinate Ca(2+). Ca(2+) is bound by residues D219, D221, D223, R225, E230, D256, N258, D260, T262, and E267.

Interacts with CACNA1F and CACNA1D (via IQ domain) in a calcium independent manner. Interacts (via N-terminus) with UNC119. In terms of processing, phosphorylated. Phosphorylation levels change with the light conditions and regulate the activity. As to expression, expressed in retina and in the inner hair cells (IHC) of the cochlea.

The protein localises to the cytoplasm. It is found in the presynapse. Involved in normal synaptic function through regulation of Ca(2+) influx and neurotransmitter release in photoreceptor synaptic terminals and in auditory transmission. Modulator of CACNA1D and CACNA1F, suppressing the calcium-dependent inactivation and shifting the activation range to more hyperpolarized voltages. This chain is Calcium-binding protein 4 (CABP4), found in Homo sapiens (Human).